Reading from the N-terminus, the 461-residue chain is Phosphatidate cytidylyltransferase 1 (461 aa).

Positions 1-67 (MLELRHRGSC…IPEIPPSSDR (67 aa)) are disordered. Arginine 7 is subject to Omega-N-methylarginine. The segment covering 20–56 (PHREGEAAGGDHETESTSDKETDIDDRYGDLDSRTDS) has biased composition (basic and acidic residues). Phosphoserine is present on residues serine 35 and serine 37. 6 helical membrane-spanning segments follow: residues 96-116 (MISL…LLVL), 149-169 (FLLC…FATF), 183-203 (HRFI…LSLV), 230-250 (LVIQ…SSVI), 279-299 (GFIG…YVLS), and 357-377 (IALS…ASGF).

Belongs to the CDS family. As to quaternary structure, homodimer. Interacts with FOS; this interaction may enhance catalytic activity. Mg(2+) is required as a cofactor. Expressed in adult tissues such as placenta, brain, small intestine, ovary, testis and prostate. Highly expressed in fetal kidney, lung and brain. Lower level in fetal liver.

It is found in the endoplasmic reticulum membrane. It catalyses the reaction a 1,2-diacyl-sn-glycero-3-phosphate + CTP + H(+) = a CDP-1,2-diacyl-sn-glycerol + diphosphate. The enzyme catalyses 1-octadecanoyl-2-(5Z,8Z,11Z,14Z-eicosatetraenoyl)-sn-glycero-3-phosphate + CTP + H(+) = 1-octadecanoyl-2-(5Z,8Z,11Z,14Z-eicosatetraenoyl)-sn-glycero-3-cytidine-5'-diphosphate + diphosphate. The catalysed reaction is 1-octadecanoyl-2-(9Z,12Z-octadecadienoyl)-sn-glycero-3-phosphate + CTP + H(+) = 1-octadecanoyl-2-(9Z,12Z-octadecadienoyl)-sn-glycero-3-cytidine-5'-diphosphate + diphosphate. It carries out the reaction 1-hexadecanoyl-2-(5Z,8Z,11Z,14Z-eicosatetraenoyl)-sn-glycero-3-phosphate + CTP + H(+) = 1-hexadecanoyl-2-(5Z,8Z,11Z,14Z-eicosatetraenoyl)-sn-glycero-3-cytidine-5'-diphosphate + diphosphate. It catalyses the reaction 1,2-di-(5Z,8Z,11Z,14Z)-eicosatetraenoyl-sn-glycero-3-phosphate + CTP + H(+) = 1,2-di-(5Z,8Z,11Z,14Z-eicosatetraenoyl)-sn-glycero-3-cytidine-5'-diphosphate + diphosphate. The enzyme catalyses 1-octadecanoyl-2-(9Z-octadecenoyl)-sn-glycero-3-phosphate + CTP + H(+) = 1-octadecanoyl-2-(9Z-octadecenoyl)-sn-glycero-3-cytidine-5'-diphosphate + diphosphate. The catalysed reaction is 1-octadecanoyl-2-(4Z,7Z,10Z,13Z,16Z,19Z-docosahexaenoyl)-sn-glycero-3-phosphate + CTP + H(+) = 1-octadecanoyl-2-(4Z,7Z,10Z,13Z,16Z,19Z-docosahexaenoyl)-sn-glycero-3-cytidine-5'-diphosphate + diphosphate. It carries out the reaction 1,2-di-(9Z,12Z-octadecadienoyl)-sn-glycero-3-phosphate + CTP + H(+) = 1,2-di-(9Z,12Z-octadecadienoyl)-sn-glycero-3-cytidine-5'-diphosphate + diphosphate. It catalyses the reaction 1,2-di-(9Z-octadecenoyl)-sn-glycero-3-phosphate + CTP + H(+) = 1,2-di-(9Z-octadecenoyl)-sn-glycero-3-cytidine-5'-diphosphate + diphosphate. Its pathway is phospholipid metabolism; CDP-diacylglycerol biosynthesis; CDP-diacylglycerol from sn-glycerol 3-phosphate: step 3/3. Inhibited by its anionic phospholipid end products, with phosphatidylinositol-(4,5)- bisphosphate showing the strongest inhibition. Catalyzes the conversion of phosphatidic acid (PA) to CDP-diacylglycerol (CDP-DAG), an essential intermediate in the synthesis of phosphatidylglycerol, cardiolipin and phosphatidylinositol. Exhibits almost no acyl chain preference for PA, showing no discrimination for the sn-1/sn-2 acyl chain composition of PAs. Plays an important role in regulating the growth of lipid droplets which are storage organelles at the center of lipid and energy homeostasis. Positively regulates the differentiation and development of adipocytes. The polypeptide is Phosphatidate cytidylyltransferase 1 (Homo sapiens (Human)).